The sequence spans 109 residues: uncharacterized protein (109 aa).

The segment at 63–109 (DPSTWEPEEHETEHCRGHTLPEKKQKPQGGHGSDKDEDKGNCGCDHC) is disordered. Composition is skewed to basic and acidic residues over residues 73-87 (ETEH…EKKQ) and 94-109 (GSDK…CDHC).

This is an uncharacterized protein from Caenorhabditis elegans.